The primary structure comprises 404 residues: Phosphoglycerate kinase (404 aa).

Substrate is bound by residues 22–24 (DLN), arginine 37, 60–63 (HLGR), arginine 119, and arginine 156. Residues lysine 206, glycine 302, glutamate 333, and 359–362 (GGDS) each bind ATP.

The protein belongs to the phosphoglycerate kinase family. As to quaternary structure, monomer.

The protein localises to the cytoplasm. It carries out the reaction (2R)-3-phosphoglycerate + ATP = (2R)-3-phospho-glyceroyl phosphate + ADP. The protein operates within carbohydrate degradation; glycolysis; pyruvate from D-glyceraldehyde 3-phosphate: step 2/5. This is Phosphoglycerate kinase from Clavibacter michiganensis subsp. michiganensis (strain NCPPB 382).